The primary structure comprises 304 residues: Ribonuclease HII (304 aa).

Residues 1–53 (MIRDTKQPIKVPAKPASRSGGKAKTVKPKTVKPKAVKAADGKAASAKASTSKA) are disordered. Over residues 24 to 35 (KTVKPKTVKPKA) the composition is skewed to basic residues. Residues 36 to 53 (VKAADGKAASAKASTSKA) are compositionally biased toward low complexity. The region spanning 96–284 (WPIAGCDEAG…VAAAWQKIEG (189 aa)) is the RNase H type-2 domain. A divalent metal cation contacts are provided by D102, E103, and D193.

The protein belongs to the RNase HII family. Requires Mn(2+) as cofactor. Mg(2+) serves as cofactor.

It is found in the cytoplasm. It carries out the reaction Endonucleolytic cleavage to 5'-phosphomonoester.. Functionally, endonuclease that specifically degrades the RNA of RNA-DNA hybrids. This is Ribonuclease HII from Rhodopseudomonas palustris (strain ATCC BAA-98 / CGA009).